A 268-amino-acid chain; its full sequence is Ubiquinone biosynthesis protein COQ4 homolog, mitochondrial (268 aa).

Zn(2+) contacts are provided by His171, Asp172, His175, and Glu187.

The protein belongs to the COQ4 family. Component of a multi-subunit COQ enzyme complex. Requires Zn(2+) as cofactor.

It localises to the mitochondrion inner membrane. The catalysed reaction is a 4-hydroxy-3-methoxy-5-(all-trans-polyprenyl)benzoate + H(+) = a 2-methoxy-6-(all-trans-polyprenyl)phenol + CO2. It participates in cofactor biosynthesis; ubiquinone biosynthesis. Its function is as follows. Lyase that catalyzes the C1-decarboxylation of 4-hydroxy-3-methoxy-5-(all-trans-polyprenyl)benzoic acid into 2-methoxy-6-(all-trans-polyprenyl)phenol during ubiquinone biosynthesis. This chain is Ubiquinone biosynthesis protein COQ4 homolog, mitochondrial, found in Drosophila sechellia (Fruit fly).